Here is a 328-residue protein sequence, read N- to C-terminus: tRNA U34 carboxymethyltransferase (328 aa).

Carboxy-S-adenosyl-L-methionine contacts are provided by residues lysine 91, tryptophan 105, lysine 110, glycine 130, 181–182, methionine 196, tyrosine 200, and arginine 315; that span reads IE.

It belongs to the class I-like SAM-binding methyltransferase superfamily. CmoB family. Homotetramer.

The catalysed reaction is carboxy-S-adenosyl-L-methionine + 5-hydroxyuridine(34) in tRNA = 5-carboxymethoxyuridine(34) in tRNA + S-adenosyl-L-homocysteine + H(+). Catalyzes carboxymethyl transfer from carboxy-S-adenosyl-L-methionine (Cx-SAM) to 5-hydroxyuridine (ho5U) to form 5-carboxymethoxyuridine (cmo5U) at position 34 in tRNAs. This Pectobacterium carotovorum subsp. carotovorum (strain PC1) protein is tRNA U34 carboxymethyltransferase.